The sequence spans 224 residues: tRNA (guanine-N(7)-)-methyltransferase (224 aa).

Glu-56, Glu-81, Asp-108, and Asp-131 together coordinate S-adenosyl-L-methionine. The active site involves Asp-131. Residues Lys-135, Asp-167, and 202 to 205 contribute to the substrate site; that span reads TKFE.

The protein belongs to the class I-like SAM-binding methyltransferase superfamily. TrmB family.

It carries out the reaction guanosine(46) in tRNA + S-adenosyl-L-methionine = N(7)-methylguanosine(46) in tRNA + S-adenosyl-L-homocysteine. It participates in tRNA modification; N(7)-methylguanine-tRNA biosynthesis. Catalyzes the formation of N(7)-methylguanine at position 46 (m7G46) in tRNA. This is tRNA (guanine-N(7)-)-methyltransferase from Nitrosomonas europaea (strain ATCC 19718 / CIP 103999 / KCTC 2705 / NBRC 14298).